The sequence spans 193 residues: Probable DNA-directed RNA polymerase subunit delta (193 aa).

The HTH HARE-type domain maps to leucine 14–tryptophan 83. Acidic residues-rich tracts occupy residues glycine 117–asparagine 134 and glutamate 142–glutamate 193. The segment at glycine 117–glutamate 193 is disordered.

The protein belongs to the RpoE family. RNAP is composed of a core of 2 alpha, a beta and a beta' subunits. The core is associated with a delta subunit and one of several sigma factors.

Functionally, participates in both the initiation and recycling phases of transcription. In the presence of the delta subunit, RNAP displays an increased specificity of transcription, a decreased affinity for nucleic acids, and an increased efficiency of RNA synthesis because of enhanced recycling. The sequence is that of Probable DNA-directed RNA polymerase subunit delta from Streptococcus suis (strain 05ZYH33).